A 501-amino-acid chain; its full sequence is Arabinose import ATP-binding protein AraG (501 aa).

ABC transporter domains lie at 4 to 239 (LEFN…MVGR) and 252 to 495 (LGDN…LPDK). 36 to 43 (GENGAGKS) contacts ATP.

Belongs to the ABC transporter superfamily. Arabinose importer (TC 3.A.1.2.2) family. As to quaternary structure, the complex is composed of two ATP-binding proteins (AraG), two transmembrane proteins (AraH) and a solute-binding protein (AraF).

It localises to the cell inner membrane. It carries out the reaction L-arabinose(out) + ATP + H2O = L-arabinose(in) + ADP + phosphate + H(+). Part of the ABC transporter complex AraFGH involved in arabinose import. Responsible for energy coupling to the transport system. This is Arabinose import ATP-binding protein AraG from Rhizobium etli (strain ATCC 51251 / DSM 11541 / JCM 21823 / NBRC 15573 / CFN 42).